Reading from the N-terminus, the 463-residue chain is Fumarate hydratase class II (463 aa).

Residues 98 to 100 (SGT), 129 to 132 (HPND), 139 to 141 (SSN), and Thr187 contribute to the substrate site. Positions 121-141 (KKGGKSPVHPNDHVNKGQSSN) are disordered. His188 serves as the catalytic Proton donor/acceptor. Ser318 is a catalytic residue. Residues Ser319 and 324–326 (KVN) each bind substrate.

The protein belongs to the class-II fumarase/aspartase family. Fumarase subfamily. In terms of assembly, homotetramer.

The protein localises to the cytoplasm. It carries out the reaction (S)-malate = fumarate + H2O. It functions in the pathway carbohydrate metabolism; tricarboxylic acid cycle; (S)-malate from fumarate: step 1/1. In terms of biological role, involved in the TCA cycle. Catalyzes the stereospecific interconversion of fumarate to L-malate. The polypeptide is Fumarate hydratase class II (Rickettsia conorii (strain ATCC VR-613 / Malish 7)).